The sequence spans 447 residues: Phosphoglucosamine mutase (447 aa).

Serine 102 acts as the Phosphoserine intermediate in catalysis. 4 residues coordinate Mg(2+): serine 102, aspartate 241, aspartate 243, and aspartate 245. Position 102 is a phosphoserine (serine 102).

Belongs to the phosphohexose mutase family. Mg(2+) is required as a cofactor. Post-translationally, activated by phosphorylation.

It carries out the reaction alpha-D-glucosamine 1-phosphate = D-glucosamine 6-phosphate. Catalyzes the conversion of glucosamine-6-phosphate to glucosamine-1-phosphate. This is Phosphoglucosamine mutase from Methylococcus capsulatus (strain ATCC 33009 / NCIMB 11132 / Bath).